Reading from the N-terminus, the 637-residue chain is Mitochondrial Rho GTPase 1 (637 aa).

At 1 to 613 (MSDGETLADV…LRRVFYLSDS (613 aa)) the chain is on the cytoplasmic side. The region spanning 7–184 (LADVRIVLIG…FYYAQKAVIY (178 aa)) is the Miro 1 domain. GTP is bound by residues 28 to 35 (SLLEDEWV), 74 to 78 (ISEMR), and 135 to 138 (LPSG). EF-hand domains follow at residues 200–235 (RAKKALIRVFKICDRDNDGYLSDTELNDFQKLCFGI) and 320–355 (EGVQFVSALFEKYDEDKDGCLSPSELQNLFSVCSAP). Residues D213, D215, D217, Y219, E224, D333, D335, D337, C339, and E344 each contribute to the Ca(2+) site. Residues 436–601 (RKVFQCLVVG…FEQLAMMAVY (166 aa)) form the Miro 2 domain. GTP is bound by residues 445 to 452 (GAKDAGKT), 482 to 486 (KVKEE), and 549 to 552 (TKVE). The chain crosses the membrane as a helical; Anchor for type IV membrane protein span at residues 614 to 634 (NLLSKITFGAAIVALAGFLVL). The Mitochondrial intermembrane portion of the chain corresponds to 635 to 637 (KNL).

This sequence belongs to the mitochondrial Rho GTPase family.

Its subcellular location is the mitochondrion outer membrane. Functionally, mitochondrial GTPase involved in mitochondrial trafficking. Probably involved in control of anterograde transport of mitochondria and their subcellular distribution. In Caenorhabditis briggsae, this protein is Mitochondrial Rho GTPase 1.